The following is a 1355-amino-acid chain: DNA-directed RNA polymerase subunit beta' (1355 aa).

Cysteine 219, cysteine 293, cysteine 300, and cysteine 303 together coordinate Zn(2+). The disordered stretch occupies residues 1331–1355; the sequence is AEVEVDDEVDDDYEDDDEDDDDYED.

It belongs to the RNA polymerase beta' chain family. RpoC2 subfamily. In terms of assembly, in cyanobacteria the RNAP catalytic core is composed of 2 alpha, 1 beta, 1 beta', 1 gamma and 1 omega subunit. When a sigma factor is associated with the core the holoenzyme is formed, which can initiate transcription. The cofactor is Zn(2+).

It catalyses the reaction RNA(n) + a ribonucleoside 5'-triphosphate = RNA(n+1) + diphosphate. Functionally, DNA-dependent RNA polymerase catalyzes the transcription of DNA into RNA using the four ribonucleoside triphosphates as substrates. This chain is DNA-directed RNA polymerase subunit beta', found in Trichormus variabilis (strain ATCC 29413 / PCC 7937) (Anabaena variabilis).